The sequence spans 415 residues: Coiled-coil domain-containing glutamate-rich protein 1 (415 aa).

Over residues 1–11 the composition is skewed to basic and acidic residues; sequence MTQTLDTKEDP. 5 disordered regions span residues 1 to 20, 29 to 64, 133 to 162, 202 to 241, and 255 to 372; these read MTQT…GWAS, FGPR…QQYG, RPPG…SPPV, QEKL…GQED, and PSLV…PLEM. 2 stretches are compositionally biased toward basic residues: residues 31-46 and 135-156; these read PRRR…RPRY and PGRK…RRSA. 2 coiled-coil regions span residues 197 to 224 and 264 to 366; these read EDMR…STAS and DEEK…EEEN. The span at 211–220 shows a compositional bias: low complexity; the sequence is ALRAQQAQAA. Residues 275 to 363 are compositionally biased toward acidic residues; that stretch reads VEEEEEGERE…EGLAEDEQTE (89 aa).

It localises to the nucleus. Functionally, regulator of histone epigenetic modifications and chromatin compaction into the sperm head, required for histone-to-protamine (HTP) transition. HTP is a key event in which somatic histones are first replaced by testis-specific histone variants, then transition proteins (TNPs) are incorporated into the spermatid nucleus, and finally protamines (PRMs) replace the TNPs to promote chromatin condensation. The polypeptide is Coiled-coil domain-containing glutamate-rich protein 1 (CCER1) (Bos taurus (Bovine)).